A 284-amino-acid chain; its full sequence is MKLCDFEVGLDQPFFLIAGTCVVESEQMTIDTAGRLKEICEKLNVPFIYKSSYDKANRSSGKSFRGLGMDEGLRILGEVKRQLGLPVLTDVHSIDEIEQVASVVDVLQTPAFLCRQTDFIHACARSGKPVNIKKGQFLAPHDMKNVIDKARDAARDAGLSEDRFMACERGVSFGYNNLVSDMRSLAIMRETNAPVVFDATHSVQLPGGQGTSSGGQREFVPVLARAAVATGVAGLFMETHPNPAEAKSDGPNAVPLNRMGALLETLVTLDQAVKRNPFLENDFN.

Belongs to the KdsA family.

The protein localises to the cytoplasm. It catalyses the reaction D-arabinose 5-phosphate + phosphoenolpyruvate + H2O = 3-deoxy-alpha-D-manno-2-octulosonate-8-phosphate + phosphate. The protein operates within carbohydrate biosynthesis; 3-deoxy-D-manno-octulosonate biosynthesis; 3-deoxy-D-manno-octulosonate from D-ribulose 5-phosphate: step 2/3. It participates in bacterial outer membrane biogenesis; lipopolysaccharide biosynthesis. This Burkholderia cenocepacia (strain HI2424) protein is 2-dehydro-3-deoxyphosphooctonate aldolase.